A 493-amino-acid polypeptide reads, in one-letter code: Serine/threonine-protein kinase PBL34 (493 aa).

Disordered regions lie at residues 1 to 42 (MGLD…EEEE) and 84 to 117 (SKSA…TPVI). The N-myristoyl glycine moiety is linked to residue Gly-2. Positions 12–37 (WKSEKPKETENKNHKKKNGDDNKSRN) are enriched in basic and acidic residues. Residues 100 to 114 (SSTTTTSNAESSSST) show a composition bias toward low complexity. Thr-131 is subject to Phosphothreonine. The region spanning 142–428 (FRPESLLGEG…VEALKPLPHL (287 aa)) is the Protein kinase domain. ATP contacts are provided by residues 148–156 (LGEGGFGCV) and Lys-180. Tyr-225 carries the phosphotyrosine modification. Residue Asp-275 is the Proton acceptor of the active site. Ser-279 carries the phosphoserine modification. Thr-306 is modified (phosphothreonine). Residue Ser-309 is modified to Phosphoserine. Residues Thr-310 and Thr-315 each carry the phosphothreonine modification. Tyr-323 bears the Phosphotyrosine mark. Residues 447 to 493 (KNGSGRSQGFGSRNGQHQPVFRTLSSPHGSSPYRHQIPSPKPKGATT) form a disordered region. Polar residues predominate over residues 450-475 (SGRSQGFGSRNGQHQPVFRTLSSPHG).

Belongs to the protein kinase superfamily. Ser/Thr protein kinase family. As to quaternary structure, interacts with the Xanthomonas campestris effector XopAC/AvrAC. Interacts with SD129. Post-translationally, phosphorylated by SD129 at Thr-306 and Thr-310 in response to the pathogen-associated molecular pattern (PAMP) 3-OH-C10:0, a medium-chain 3-hydroxy fatty acid.

It localises to the cell membrane. It catalyses the reaction L-seryl-[protein] + ATP = O-phospho-L-seryl-[protein] + ADP + H(+). The enzyme catalyses L-threonyl-[protein] + ATP = O-phospho-L-threonyl-[protein] + ADP + H(+). In terms of biological role, involved in chitin-triggered immune signaling and is required for reactive oxygen species (ROS) production. Acts downstream of SD129 in defense signaling triggered by the pathogen-associated molecular pattern (PAMP) 3-OH-C10:0, a medium-chain 3-hydroxy fatty acid. This is Serine/threonine-protein kinase PBL34 from Arabidopsis thaliana (Mouse-ear cress).